A 471-amino-acid polypeptide reads, in one-letter code: UDP-N-acetylmuramate--L-alanine ligase (471 aa).

114-120 (GTHGKTT) contributes to the ATP binding site.

The protein belongs to the MurCDEF family.

The protein resides in the cytoplasm. The catalysed reaction is UDP-N-acetyl-alpha-D-muramate + L-alanine + ATP = UDP-N-acetyl-alpha-D-muramoyl-L-alanine + ADP + phosphate + H(+). It functions in the pathway cell wall biogenesis; peptidoglycan biosynthesis. Functionally, cell wall formation. The polypeptide is UDP-N-acetylmuramate--L-alanine ligase (Rhizobium meliloti (strain 1021) (Ensifer meliloti)).